The following is a 166-amino-acid chain: Small ribosomal subunit protein uS5 (166 aa).

In terms of domain architecture, S5 DRBM spans Leu-11–Val-74.

The protein belongs to the universal ribosomal protein uS5 family. As to quaternary structure, part of the 30S ribosomal subunit. Contacts proteins S4 and S8.

Its function is as follows. With S4 and S12 plays an important role in translational accuracy. In terms of biological role, located at the back of the 30S subunit body where it stabilizes the conformation of the head with respect to the body. The sequence is that of Small ribosomal subunit protein uS5 from Syntrophobacter fumaroxidans (strain DSM 10017 / MPOB).